The primary structure comprises 291 residues: Flap endonuclease (291 aa).

A helical arch region spans residues Tyr82–Lys116. Lys83 contacts DNA. Mg(2+)-binding residues include Asp130, Asp153, Asp155, and Asp201. A DNA-binding; H3TH region spans residues Asp188–Phe224. A 5'-3' exonuclease domain is found at Glu190–Pro263. The K(+) site is built by Val209 and Ile212.

It depends on Mg(2+) as a cofactor. The cofactor is K(+).

It carries out the reaction Exonucleolytic cleavage in the 5'- to 3'-direction to yield nucleoside 5'-phosphates.. With respect to regulation, inhibited by p-hydroxymercuribenzoate (PHMB). In terms of biological role, catalyzes both the 5'-exonucleolytic and structure-specific endonucleolytic hydrolysis of DNA branched nucleic acid molecules and probably plays a role in viral genome replication. Active on flap (branched duplex DNA containing a free single-stranded 5'-end), 5'overhangs and pseudo-Y structures. The substrates require a free, single-stranded 5' end, with endonucleolytic hydrolysis occurring at the junction of double- and single-stranded DNA. This function may be used for example to trim such branched molecules generated by Okazaki fragments synthesis during replication. The chain is Flap endonuclease (D15) from Escherichia phage T5 (Enterobacteria phage T5).